Consider the following 149-residue polypeptide: Transcriptional repressor NrdR (149 aa).

A zinc finger lies at 3–34 (CPFCSAVDTKVIDSRLVAEGHQVRRRRECLLC). In terms of domain architecture, ATP-cone spans 49–139 (PRVIKSNGSR…VYRSFEDIRE (91 aa)).

Belongs to the NrdR family. The cofactor is Zn(2+).

Negatively regulates transcription of bacterial ribonucleotide reductase nrd genes and operons by binding to NrdR-boxes. The chain is Transcriptional repressor NrdR from Aeromonas hydrophila subsp. hydrophila (strain ATCC 7966 / DSM 30187 / BCRC 13018 / CCUG 14551 / JCM 1027 / KCTC 2358 / NCIMB 9240 / NCTC 8049).